A 96-amino-acid chain; its full sequence is Co-chaperonin GroES (96 aa).

It belongs to the GroES chaperonin family. As to quaternary structure, heptamer of 7 subunits arranged in a ring. Interacts with the chaperonin GroEL.

The protein resides in the cytoplasm. Together with the chaperonin GroEL, plays an essential role in assisting protein folding. The GroEL-GroES system forms a nano-cage that allows encapsulation of the non-native substrate proteins and provides a physical environment optimized to promote and accelerate protein folding. GroES binds to the apical surface of the GroEL ring, thereby capping the opening of the GroEL channel. The polypeptide is Co-chaperonin GroES (Leptothrix cholodnii (strain ATCC 51168 / LMG 8142 / SP-6) (Leptothrix discophora (strain SP-6))).